The sequence spans 337 residues: Histidine N-acetyltransferase (337 aa).

The propeptide at 1 to 2 (MK) is removed in mature form. The N-acetyltransferase domain maps to 21–157 (LQFSVATEED…GILLMRFRAE (137 aa)).

In terms of tissue distribution, expressed exclusively in the brain and lens.

It carries out the reaction L-histidine + acetyl-CoA = N(alpha)-acetyl-L-histidine + CoA + H(+). In terms of biological role, enzyme responsible for the N-acetyl-histidine (NAH) synthesis, which is a major constituent of brain and lens of ectothermic vertebrates. The chain is Histidine N-acetyltransferase (hisat) from Oreochromis niloticus (Nile tilapia).